We begin with the raw amino-acid sequence, 142 residues long: Maximins y/H11 (142 aa).

The signal sequence occupies residues 1–18 (MNFKYIVAVSFLITSGYA). The propeptide occupies 19–43 (ESVKNDEQSLSQRDVLEEESLREIR). The residue at position 68 (phenylalanine 68) is a Phenylalanine amide. Positions 72–121 (SAEDHEVMKRLEAVIRDLDSLDHPEEASERETRGFNQEEIANLFTKKEKR) are excised as a propeptide. Position 141 is an isoleucine amide (isoleucine 141).

Belongs to the bombinin family. In terms of tissue distribution, expressed by the skin glands.

It is found in the secreted. In terms of biological role, maximin-y shows antimicrobial activity against bacteria and against the fungus C.albicans. It has little hemolytic activity. Functionally, maximin-H11 shows antimicrobial activity against bacteria and against the fungus C.albicans. Shows strong hemolytic activity. This chain is Maximins y/H11, found in Bombina maxima (Giant fire-bellied toad).